A 383-amino-acid polypeptide reads, in one-letter code: Mannitol-1-phosphate 5-dehydrogenase (383 aa).

3–14 (ALHFGAGNIGRG) is an NAD(+) binding site.

This sequence belongs to the mannitol dehydrogenase family.

It carries out the reaction D-mannitol 1-phosphate + NAD(+) = beta-D-fructose 6-phosphate + NADH + H(+). The sequence is that of Mannitol-1-phosphate 5-dehydrogenase from Serratia proteamaculans (strain 568).